Here is a 428-residue protein sequence, read N- to C-terminus: AP-1 complex subunit mu-2 (428 aa).

Positions 170 to 426 (KNEVFLDVIE…ITMAGEYELR (257 aa)) constitute an MHD domain.

This sequence belongs to the adaptor complexes medium subunit family. As to quaternary structure, adaptor protein complex 1 (AP-1) is a heterotetramer composed of two large adaptins (gamma-type subunit and beta-type subunit), a medium adaptin (mu-type subunit) and a small adaptin (sigma-type subunit). In terms of tissue distribution, ubiquitous.

The protein localises to the golgi apparatus. Its subcellular location is the trans-Golgi network membrane. The protein resides in the early endosome membrane. It is found in the cytoplasmic vesicle. It localises to the clathrin-coated vesicle membrane. Its function is as follows. Subunit of clathrin-associated adaptor protein complex 1 that plays a role in protein sorting at the trans-Golgi network and early endosomes (TGN/EE). The AP complexes mediate the recruitment of clathrin to membranes and the recognition of sorting signals within the cytosolic tails of transmembrane cargo molecules. Required for KNOLLE localization at the cell plate to mediate cytokinesis. Functions redundantly with AP1M1 in multiple post-Golgi trafficking pathways leading from the TGN to the vacuole, the plasma membrane, and the cell-division plane. This is AP-1 complex subunit mu-2 (AP1M2) from Arabidopsis thaliana (Mouse-ear cress).